Reading from the N-terminus, the 855-residue chain is MKVKGTRRNYQHLWRWGTLLLGMLMICSATEKLWVTVYYGVPVWKEATTTLFCASDARAYDTEVHNVWATHACVPTDPNPQEVVLGNVTENFNMWKNNMVEQMQEDIISLWDQSLKPCVKLTPLCVTLNCTDLGKATNTNSSNWKEEIKGEIKNCSFNITTSIRDKIQKENALFRNLDVVPIDNASTTTNYTNYRLIHCNRSVITQACPKVSFEPIPIHYCTPAGFAILKCNNKTFNGKGPCTNVSTVQCTHGIRPIVSTQLLLNGSLAEEEVVIRSDNFTNNAKTIIVQLNESVAINCTRPNNNTRKSIYIGPGRAFHTTGRIIGDIRKAHCNISRAQWNNTLEQIVKKLREQFGNNKTIVFNQSSGGDPEIVMHSFNCRGEFFYCNTTQLFNNTWRLNHTEGTKGNDTIILPCRIKQIINMWQEVGKAMYAPPIGGQISCSSNITGLLLTRDGGTNVTNDTEVFRPGGGDMRDNWRSELYKYKVIKIEPLGIAPTKAKRRVVQREKRAVGIVGAMFLGFLGAAGSTMGAVSLTLTVQARQLLSGIVQQQNNLLRAIEAQQHLLQLTVWGIKQLQARVLAVERYLRDQQLLGIWGCSGKLICTTAVPWNASWSNKSLEDIWDNMTWMQWEREIDNYTNTIYTLLEESQNQQEKNEQELLELDKWASLWNWFSITNWLWYIKIFIMIVGGLVGLRIVFAVLSIVNRVRQGYSPLSFQTRLPVPRGPDRPDGIEEEGGERDRDRSVRLVDGFLALIWEDLRSLCLFSYRRLRDLLLIAARTVEILGHRGWEALKYWWSLLQYWIQELKNSAVSWLNATAIAVTEGTDRVIEVAQRAYRAILHIHRRIRQGLERLLL.

The signal sequence occupies residues 1–31 (MKVKGTRRNYQHLWRWGTLLLGMLMICSATE). Topologically, residues 32-683 (KLWVTVYYGV…ITNWLWYIKI (652 aa)) are extracellular. Cys-53 and Cys-73 form a disulfide bridge. Asn-87, Asn-129, Asn-140, Asn-154, Asn-158, Asn-184, Asn-190, Asn-200, Asn-233, Asn-244, Asn-265, Asn-279, Asn-292, Asn-298, Asn-304, Asn-334, Asn-341, Asn-358, and Asn-364 each carry an N-linked (GlcNAc...) asparagine; by host glycan. 5 disulfide bridges follow: Cys-118–Cys-208, Cys-125–Cys-199, Cys-130–Cys-155, Cys-221–Cys-250, and Cys-231–Cys-242. The interval 130–154 (CTDLGKATNTNSSNWKEEIKGEIKN) is V1. The segment at 155 to 199 (CSFNITTSIRDKIQKENALFRNLDVVPIDNASTTTNYTNYRLIHC) is V2. Residues 299–332 (CTRPNNNTRKSIYIGPGRAFHTTGRIIGDIRKAH) are V3. Cys-299 and Cys-333 are oxidised to a cystine. Residues 366 to 376 (SSGGDPEIVMH) form a CD4-binding loop region. 2 disulfides stabilise this stretch: Cys-380-Cys-442 and Cys-387-Cys-415. A V4 region spans residues 387–415 (CNTTQLFNNTWRLNHTEGTKGNDTIILPC). Asn-388, Asn-394, Asn-400, Asn-408, Asn-445, Asn-458, and Asn-461 each carry an N-linked (GlcNAc...) asparagine; by host glycan. 2 V5 regions span residues 458-469 (NVTNDTEVFRPG) and 460-469 (TNDTEVFRPG). The segment at 510 to 531 (AVGIVGAMFLGFLGAAGSTMGA) is fusion peptide. The interval 573 to 591 (KQLQARVLAVERYLRDQQL) is immunosuppression. Cys-597 and Cys-603 are disulfide-bonded. Asn-610, Asn-615, Asn-624, and Asn-636 each carry an N-linked (GlcNAc...) asparagine; by host glycan. Residues 632–666 (REIDNYTNTIYTLLEESQNQQEKNEQELLELDKWA) are a coiled coil. The MPER; binding to GalCer stretch occupies residues 661 to 682 (ELDKWASLWNWFSITNWLWYIK). Residues 684-704 (FIMIVGGLVGLRIVFAVLSIV) form a helical membrane-spanning segment. Residues 705 to 855 (NRVRQGYSPL…IRQGLERLLL (151 aa)) are Cytoplasmic-facing. The YXXL motif; contains endocytosis signal motif lies at 711-714 (YSPL). The segment at 720–739 (LPVPRGPDRPDGIEEEGGER) is disordered. Cys-763 is lipidated: S-palmitoyl cysteine; by host. Residues 854-855 (LL) carry the Di-leucine internalization motif motif.

Belongs to the HIV-1 env protein family. In terms of assembly, the mature envelope protein (Env) consists of a homotrimer of non-covalently associated gp120-gp41 heterodimers. The resulting complex protrudes from the virus surface as a spike. There seems to be as few as 10 spikes on the average virion. Interacts with host CD4, CCR5 and CXCR4. Gp120 also interacts with the C-type lectins CD209/DC-SIGN and CLEC4M/DC-SIGNR (collectively referred to as DC-SIGN(R)). Gp120 and gp41 interact with GalCer. Gp120 interacts with host ITGA4/ITGB7 complex; on CD4+ T-cells, this interaction results in rapid activation of integrin ITGAL/LFA-1, which facilitates efficient cell-to-cell spreading of HIV-1. Gp120 interacts with cell-associated heparan sulfate; this interaction increases virus infectivity on permissive cells and may be involved in infection of CD4- cells. The mature envelope protein (Env) consists of a homotrimer of non-covalently associated gp120-gp41 heterodimers. The resulting complex protrudes from the virus surface as a spike. There seems to be as few as 10 spikes on the average virion. In terms of processing, highly glycosylated by host. The high number of glycan on the protein is reffered to as 'glycan shield' because it contributes to hide protein sequence from adaptive immune system. Palmitoylation of the transmembrane protein and of Env polyprotein (prior to its proteolytic cleavage) is essential for their association with host cell membrane lipid rafts. Palmitoylation is therefore required for envelope trafficking to classical lipid rafts, but not for viral replication. Post-translationally, specific enzymatic cleavages in vivo yield mature proteins. Envelope glycoproteins are synthesized as an inactive precursor that is heavily N-glycosylated and processed likely by host cell furin in the Golgi to yield the mature SU and TM proteins. The cleavage site between SU and TM requires the minimal sequence [KR]-X-[KR]-R. About 2 of the 9 disulfide bonds of gp41 are reduced by P4HB/PDI, following binding to CD4 receptor.

It localises to the virion membrane. The protein resides in the host cell membrane. It is found in the host endosome membrane. Functionally, oligomerizes in the host endoplasmic reticulum into predominantly trimers. In a second time, gp160 transits in the host Golgi, where glycosylation is completed. The precursor is then proteolytically cleaved in the trans-Golgi and thereby activated by cellular furin or furin-like proteases to produce gp120 and gp41. Attaches the virus to the host lymphoid cell by binding to the primary receptor CD4. This interaction induces a structural rearrangement creating a high affinity binding site for a chemokine coreceptor like CXCR4 and/or CCR5. Acts as a ligand for CD209/DC-SIGN and CLEC4M/DC-SIGNR, which are respectively found on dendritic cells (DCs), and on endothelial cells of liver sinusoids and lymph node sinuses. These interactions allow capture of viral particles at mucosal surfaces by these cells and subsequent transmission to permissive cells. HIV subverts the migration properties of dendritic cells to gain access to CD4+ T-cells in lymph nodes. Virus transmission to permissive T-cells occurs either in trans (without DCs infection, through viral capture and transmission), or in cis (following DCs productive infection, through the usual CD4-gp120 interaction), thereby inducing a robust infection. In trans infection, bound virions remain infectious over days and it is proposed that they are not degraded, but protected in non-lysosomal acidic organelles within the DCs close to the cell membrane thus contributing to the viral infectious potential during DCs' migration from the periphery to the lymphoid tissues. On arrival at lymphoid tissues, intact virions recycle back to DCs' cell surface allowing virus transmission to CD4+ T-cells. Its function is as follows. Acts as a class I viral fusion protein. Under the current model, the protein has at least 3 conformational states: pre-fusion native state, pre-hairpin intermediate state, and post-fusion hairpin state. During fusion of viral and target intracellular membranes, the coiled coil regions (heptad repeats) assume a trimer-of-hairpins structure, positioning the fusion peptide in close proximity to the C-terminal region of the ectodomain. The formation of this structure appears to drive apposition and subsequent fusion of viral and target cell membranes. Complete fusion occurs in host cell endosomes and is dynamin-dependent, however some lipid transfer might occur at the plasma membrane. The virus undergoes clathrin-dependent internalization long before endosomal fusion, thus minimizing the surface exposure of conserved viral epitopes during fusion and reducing the efficacy of inhibitors targeting these epitopes. Membranes fusion leads to delivery of the nucleocapsid into the cytoplasm. This is Envelope glycoprotein gp160 from Homo sapiens (Human).